Reading from the N-terminus, the 357-residue chain is Hypersensitivity response secretion protein HrcU (357 aa).

The interval 1 to 21 (MSDEKTEQPTDKKLEDAHRDG) is disordered. The next 5 helical transmembrane spans lie at 29–49 (LTAAAVLLSGCLLLALTASVF), 84–104 (LVLMTLPVGFVFALVAWIATW), 149–169 (VAVAAAVWKLILILMPSIVGA), 180–200 (IGMTLLVRLLAAGGGLFLILG), and 323–343 (LYGPVPEPLFETVAEVLAWVG).

Belongs to the type III secretion exporter family.

It localises to the cell membrane. Functionally, involved in the secretion of PopA, a proteinaceous elicitor of the hypersensitivity response in plants. The chain is Hypersensitivity response secretion protein HrcU (hrcU) from Ralstonia nicotianae (strain ATCC BAA-1114 / GMI1000) (Ralstonia solanacearum).